A 246-amino-acid chain; its full sequence is 1-(5-phosphoribosyl)-5-[(5-phosphoribosylamino)methylideneamino] imidazole-4-carboxamide isomerase (246 aa).

Asp-10 serves as the catalytic Proton acceptor. The active-site Proton donor is the Asp-135.

This sequence belongs to the HisA/HisF family.

It localises to the cytoplasm. The enzyme catalyses 1-(5-phospho-beta-D-ribosyl)-5-[(5-phospho-beta-D-ribosylamino)methylideneamino]imidazole-4-carboxamide = 5-[(5-phospho-1-deoxy-D-ribulos-1-ylimino)methylamino]-1-(5-phospho-beta-D-ribosyl)imidazole-4-carboxamide. Its pathway is amino-acid biosynthesis; L-histidine biosynthesis; L-histidine from 5-phospho-alpha-D-ribose 1-diphosphate: step 4/9. This Methanococcoides burtonii (strain DSM 6242 / NBRC 107633 / OCM 468 / ACE-M) protein is 1-(5-phosphoribosyl)-5-[(5-phosphoribosylamino)methylideneamino] imidazole-4-carboxamide isomerase.